We begin with the raw amino-acid sequence, 597 residues long: uncharacterized protein (597 aa).

The region spanning 378 to 575 (EVSFVVDNSG…YLPRELLRTL (198 aa)) is the VWFA domain.

This is an uncharacterized protein from Treponema pallidum (strain Nichols).